We begin with the raw amino-acid sequence, 287 residues long: 4-hydroxybenzoate octaprenyltransferase (287 aa).

The next 9 helical transmembrane spans lie at 20–40 (IGSLLLLWPTLWALFLAADGL), 43–63 (MHVLVVFVLGVVFMRAAGCVI), 94–114 (LGLFGLLVLVSFVLVLTMNTL), 115–135 (TIMLSVVGLVLAAAYPFMKRY), 137–157 (HLPQLVLGMAFGWSIPMAYAA), 159–179 (AGELPVVAWLLFTANILWTIA), 210–230 (IIIGVLQLSTLVTMILIGHSL), 235–255 (IYYWFLLMASGLFVYQQRLIG), and 266–286 (FLNNNYVGMLIFLGIAISVMM).

Belongs to the UbiA prenyltransferase family. Requires Mg(2+) as cofactor.

It localises to the cell inner membrane. It carries out the reaction all-trans-octaprenyl diphosphate + 4-hydroxybenzoate = 4-hydroxy-3-(all-trans-octaprenyl)benzoate + diphosphate. The protein operates within cofactor biosynthesis; ubiquinone biosynthesis. Functionally, catalyzes the prenylation of para-hydroxybenzoate (PHB) with an all-trans polyprenyl group. Mediates the second step in the final reaction sequence of ubiquinone-8 (UQ-8) biosynthesis, which is the condensation of the polyisoprenoid side chain with PHB, generating the first membrane-bound Q intermediate 3-octaprenyl-4-hydroxybenzoate. The sequence is that of 4-hydroxybenzoate octaprenyltransferase from Photobacterium profundum (strain SS9).